Reading from the N-terminus, the 329-residue chain is Cytosolic arginine sensor for mTORC1 subunit 1 (329 aa).

At Ser-14 the chain carries Phosphoserine. ACT domains lie at 72–138 (AEAT…HTLA) and 260–321 (GELW…EVLQ). Residues 111–112 (SV), Gly-274, 280–281 (IV), and 300–304 (TFNFD) contribute to the L-arginine site.

Belongs to the GATS family. Forms homodimers and heterodimers with CASTOR2. Interacts with the GATOR2 complex which is composed of MIOS, SEC13, SEH1L, WDR24 and WDR59; the interaction is negatively regulated by arginine. Interacts with TM4SF5; the interaction is positively regulated by leucine and is negatively regulated by arginine. Phosphorylation at Ser-14 by AKT1, promoting the interaction between CASTOR1 and RNF167. Post-translationally, ubiquitinated by RNF167 via 'Lys-29'-polyubiquitination, leading to its degradation, releasing the GATOR2 complex. Ubiquitination by RNF167 is promoted by phosphorylation at Ser-14 by AKT1.

The protein resides in the cytoplasm. Its subcellular location is the cytosol. Functions as an intracellular arginine sensor within the amino acid-sensing branch of the TORC1 signaling pathway. As a homodimer or a heterodimer with CASTOR2, binds and inhibits the GATOR subcomplex GATOR2 and thereby mTORC1. Binding of arginine to CASTOR1 allosterically disrupts the interaction of CASTOR1-containing dimers with GATOR2 which can in turn activate mTORC1 and the TORC1 signaling pathway. The sequence is that of Cytosolic arginine sensor for mTORC1 subunit 1 from Pongo abelii (Sumatran orangutan).